Reading from the N-terminus, the 763-residue chain is Phosphoglycerol transferase I (763 aa).

Transmembrane regions (helical) follow at residues Met-1 to Ala-21, Trp-26 to Phe-46, Ile-77 to Ile-97, and Phe-108 to Phe-128.

This sequence belongs to the OpgB family.

It localises to the cell inner membrane. The catalysed reaction is a phosphatidylglycerol + a membrane-derived-oligosaccharide D-glucose = a 1,2-diacyl-sn-glycerol + a membrane-derived-oligosaccharide 6-(glycerophospho)-D-glucose.. It functions in the pathway glycan metabolism; osmoregulated periplasmic glucan (OPG) biosynthesis. In terms of biological role, transfers a phosphoglycerol residue from phosphatidylglycerol to the membrane-bound nascent glucan backbones. The sequence is that of Phosphoglycerol transferase I from Shigella boydii serotype 18 (strain CDC 3083-94 / BS512).